The primary structure comprises 72 residues: Kappa-conotoxin PVIIA (72 aa).

An N-terminal signal peptide occupies residues 1–22 (MKLTCVVIVVVLFLTACQLITA). The propeptide occupies 23-45 (DDSRRTQKHRALRSTTKLSLSTR). Disulfide bonds link cysteine 46–cysteine 61, cysteine 53–cysteine 65, and cysteine 60–cysteine 71. Position 49 is a 4-hydroxyproline (proline 49).

Belongs to the conotoxin O1 superfamily. In terms of processing, this toxin is not amidated at the C-terminal Val residue. Expressed by the venom duct.

It localises to the secreted. Its function is as follows. Kappa-conotoxins bind and inhibit voltage-gated potassium channels (Kv). This toxin inhibits the drosophila Shaker channel (IC(50)=57-80 nM). In vivo, when tested in fish, this toxin induces hyperactivity, followed by continuous contraction and extension of major fins, without immobilization or death. Injection of this peptide together with the delta-conotoxin PVIA causes the sudden tetanus of prey (STOP) syndrome, which is a single, lethal 'fin-pop' in envenomed fish. When tested in mice, induces hyperactivity. This chain is Kappa-conotoxin PVIIA, found in Conus purpurascens (Purple cone).